The chain runs to 282 residues: Probable septum site-determining protein MinC (282 aa).

The disordered stretch occupies residues S103–A147. A compositionally biased stretch (basic and acidic residues) spans Q104–K120.

This sequence belongs to the MinC family. In terms of assembly, interacts with MinD and FtsZ.

Its function is as follows. Cell division inhibitor that blocks the formation of polar Z ring septums. Rapidly oscillates between the poles of the cell to destabilize FtsZ filaments that have formed before they mature into polar Z rings. Prevents FtsZ polymerization. The sequence is that of Probable septum site-determining protein MinC from Cupriavidus metallidurans (strain ATCC 43123 / DSM 2839 / NBRC 102507 / CH34) (Ralstonia metallidurans).